Here is a 421-residue protein sequence, read N- to C-terminus: 4-hydroxy-3-methylbut-2-en-1-yl diphosphate synthase (flavodoxin) (421 aa).

The [4Fe-4S] cluster site is built by Cys311, Cys314, Cys357, and Glu364.

Belongs to the IspG family. The cofactor is [4Fe-4S] cluster.

It catalyses the reaction (2E)-4-hydroxy-3-methylbut-2-enyl diphosphate + oxidized [flavodoxin] + H2O + 2 H(+) = 2-C-methyl-D-erythritol 2,4-cyclic diphosphate + reduced [flavodoxin]. Its pathway is isoprenoid biosynthesis; isopentenyl diphosphate biosynthesis via DXP pathway; isopentenyl diphosphate from 1-deoxy-D-xylulose 5-phosphate: step 5/6. Its function is as follows. Converts 2C-methyl-D-erythritol 2,4-cyclodiphosphate (ME-2,4cPP) into 1-hydroxy-2-methyl-2-(E)-butenyl 4-diphosphate. The chain is 4-hydroxy-3-methylbut-2-en-1-yl diphosphate synthase (flavodoxin) from Xanthomonas oryzae pv. oryzae (strain MAFF 311018).